The following is a 40-amino-acid chain: Photosystem II reaction center protein J (40 aa).

The chain crosses the membrane as a helical span at residues 8–28 (IPLWLIGTIAGILVIGLVGIF).

Belongs to the PsbJ family. PSII is composed of 1 copy each of membrane proteins PsbA, PsbB, PsbC, PsbD, PsbE, PsbF, PsbH, PsbI, PsbJ, PsbK, PsbL, PsbM, PsbT, PsbX, PsbY, PsbZ, Psb30/Ycf12, at least 3 peripheral proteins of the oxygen-evolving complex and a large number of cofactors. It forms dimeric complexes.

The protein localises to the plastid. It localises to the chloroplast thylakoid membrane. One of the components of the core complex of photosystem II (PSII). PSII is a light-driven water:plastoquinone oxidoreductase that uses light energy to abstract electrons from H(2)O, generating O(2) and a proton gradient subsequently used for ATP formation. It consists of a core antenna complex that captures photons, and an electron transfer chain that converts photonic excitation into a charge separation. The chain is Photosystem II reaction center protein J from Anthoceros angustus (Hornwort).